The primary structure comprises 310 residues: tRNA dimethylallyltransferase 2 (310 aa).

15 to 22 (GPTASGKT) serves as a coordination point for ATP. 17–22 (TASGKT) is a binding site for substrate. Positions 40–43 (DSMQ) are interaction with substrate tRNA.

Belongs to the IPP transferase family. As to quaternary structure, monomer. Mg(2+) serves as cofactor.

The enzyme catalyses adenosine(37) in tRNA + dimethylallyl diphosphate = N(6)-dimethylallyladenosine(37) in tRNA + diphosphate. Its function is as follows. Catalyzes the transfer of a dimethylallyl group onto the adenine at position 37 in tRNAs that read codons beginning with uridine, leading to the formation of N6-(dimethylallyl)adenosine (i(6)A). This is tRNA dimethylallyltransferase 2 from Geotalea uraniireducens (strain Rf4) (Geobacter uraniireducens).